A 245-amino-acid polypeptide reads, in one-letter code: Histone deacetylase HDT1 (245 aa).

Residue Met-1 is modified to N-acetylmethionine. 2 required to repress transcription regions span residues 2 to 5 (EFWG) and 101 to 162 (GYSE…EEEE). The disordered stretch occupies residues 99 to 245 (PQGYSEEEEE…HNKAKHAAAK (147 aa)). Residues 103 to 113 (SEEEEEEEEEV) are compositionally biased toward acidic residues. Low complexity predominate over residues 114-124 (PAGNAAKAVAK). Acidic residues predominate over residues 137–162 (DDEEDESDSDGMDEDDSDGEDSEEEE). Residues 178–195 (TTPKAPVSAKKAKVAVTP) are compositionally biased toward low complexity. Over residues 208–234 (ANQSPKSASQVSCGSCKKTFNSGNALE) the composition is skewed to polar residues. Position 211 is a phosphoserine (Ser-211). Residues 218-241 (VSCGSCKKTFNSGNALESHNKAKH) form a C2H2-type zinc finger.

It belongs to the histone deacetylase HD2 family. Interacts with DNMT2. Interacts with DEK3. In terms of tissue distribution, expressed in leaves, roots, stems, young plantlets, flowers and siliques. Highest levels in ovules, embryos, shoot apical meristems and first leaves. Also expressed in somatic embryos.

It localises to the nucleus. The protein resides in the nucleolus. Its function is as follows. Probably mediates the deacetylation of lysine residues on the N-terminal part of the core histones (H2A, H2B, H3 and H4). Histone deacetylation gives a tag for epigenetic repression and plays an important role in transcriptional regulation, cell cycle progression and developmental events. Required for histone H3 'Lys-9' deacetylation. Involved in rRNA gene silencing in nucleolar dominance. Seems to be implicated in the regulation of genes involved in seeds development. This is Histone deacetylase HDT1 from Arabidopsis thaliana (Mouse-ear cress).